The chain runs to 161 residues: Bacterioferritin (161 aa).

A Ferritin-like diiron domain is found at Met1–Gly145. Fe cation-binding residues include Glu18 and Glu51. Residue Met52 participates in heme b binding. Residues His54, Glu94, Glu127, and His130 each contribute to the Fe cation site.

The protein belongs to the bacterioferritin family. Homooligomer of 24 subunits, arranged as 12 dimers, that are packed together to form an approximately spherical molecule with a central cavity, in which large amounts of iron can be deposited. Heme b serves as cofactor.

The catalysed reaction is 4 Fe(2+) + O2 + 4 H(+) = 4 Fe(3+) + 2 H2O. It catalyses the reaction Fe(2+)(in) = Fe(2+)(out). Iron-storage protein, whose ferroxidase center binds Fe(2+), oxidizes it using dioxygen to Fe(3+), and participates in the subsequent Fe(3+) oxide mineral core formation within the central cavity of the BFR protein shell. The polypeptide is Bacterioferritin (bfr) (Rhodobacter capsulatus (Rhodopseudomonas capsulata)).